The primary structure comprises 379 residues: Botryococcene C-methyltransferase (379 aa).

Residues Leu-17 to Ile-37 form a helical membrane-spanning segment.

The protein belongs to the class I-like SAM-binding methyltransferase superfamily. Erg6/SMT family.

It is found in the microsome membrane. It carries out the reaction C30 botryococcene + 2 S-adenosyl-L-methionine = 3,20-dimethyl-1,2,21,22-tetradehydro-2,3,20,21-tetrahydrobotryococcene + 2 S-adenosyl-L-homocysteine + 2 H(+). In terms of biological role, converts botryococcene to mono- and dimethyl derivatives, but not to tri- and tetramethylated products. Unable to methylate cycloartenol, zymosterol or lanosterol, but can also use squalene as substrate. Methylates both C-3 and C22 positions, but only C-3 position in monomethylated squalenes. In contrast, monomethylated botryococcene occured mainly at the C-20 position yielding showacene, but also at the C-3 position yielding isoshowacene. This Botryococcus braunii (Green alga) protein is Botryococcene C-methyltransferase (TMT-3).